A 315-amino-acid polypeptide reads, in one-letter code: N-acetyl-gamma-glutamyl-phosphate reductase (315 aa).

Residue Cys-117 is part of the active site.

This sequence belongs to the NAGSA dehydrogenase family. Type 2 subfamily.

It localises to the cytoplasm. The catalysed reaction is N-acetyl-L-glutamate 5-semialdehyde + phosphate + NADP(+) = N-acetyl-L-glutamyl 5-phosphate + NADPH + H(+). It participates in amino-acid biosynthesis; L-arginine biosynthesis; N(2)-acetyl-L-ornithine from L-glutamate: step 3/4. Catalyzes the NADPH-dependent reduction of N-acetyl-5-glutamyl phosphate to yield N-acetyl-L-glutamate 5-semialdehyde. The protein is N-acetyl-gamma-glutamyl-phosphate reductase of Burkholderia lata (strain ATCC 17760 / DSM 23089 / LMG 22485 / NCIMB 9086 / R18194 / 383).